Reading from the N-terminus, the 275-residue chain is Diaminopimelate epimerase (275 aa).

Substrate is bound by residues N13, Q46, and N65. Catalysis depends on C74, which acts as the Proton donor. Substrate-binding positions include 75 to 76 (GN), N158, N191, and 209 to 210 (ER). C218 acts as the Proton acceptor in catalysis. A substrate-binding site is contributed by 219–220 (GT).

Belongs to the diaminopimelate epimerase family. Homodimer.

The protein resides in the cytoplasm. The enzyme catalyses (2S,6S)-2,6-diaminopimelate = meso-2,6-diaminopimelate. It participates in amino-acid biosynthesis; L-lysine biosynthesis via DAP pathway; DL-2,6-diaminopimelate from LL-2,6-diaminopimelate: step 1/1. Its function is as follows. Catalyzes the stereoinversion of LL-2,6-diaminopimelate (L,L-DAP) to meso-diaminopimelate (meso-DAP), a precursor of L-lysine and an essential component of the bacterial peptidoglycan. In Nitrosomonas europaea (strain ATCC 19718 / CIP 103999 / KCTC 2705 / NBRC 14298), this protein is Diaminopimelate epimerase.